The sequence spans 394 residues: Probable sugar efflux transporter (394 aa).

Helical transmembrane passes span valine 15 to leucine 35, valine 50 to leucine 70, methionine 79 to tryptophan 99, isoleucine 109 to valine 129, glutamine 137 to glycine 157, isoleucine 168 to leucine 188, proline 209 to tyrosine 229, phenylalanine 249 to glycine 269, phenylalanine 272 to tyrosine 292, leucine 299 to valine 319, valine 333 to glycine 353, and methionine 362 to tryptophan 382.

This sequence belongs to the major facilitator superfamily. SotB (TC 2.A.1.2) family.

The protein resides in the cell inner membrane. Its function is as follows. Involved in the efflux of sugars. The physiological role may be the reduction of the intracellular concentration of toxic sugars or sugar metabolites. This Erwinia tasmaniensis (strain DSM 17950 / CFBP 7177 / CIP 109463 / NCPPB 4357 / Et1/99) protein is Probable sugar efflux transporter.